A 126-amino-acid polypeptide reads, in one-letter code: MSVPTLSNKPETVDLLVLAPGEKKVTCTISDKGDCNIFVIKLEDHTIGNLIKIQLCQDPKVLFAAYRQPHPLQNAIEITIKPKGYAGVKLLSDNVNNILSQVATLKENFAKKIQKYKESNSYYEDY.

The protein belongs to the archaeal Rpo11/eukaryotic RPB11/RPC19 RNA polymerase subunit family. In terms of assembly, component of the RNA polymerase II (Pol II) complex consisting of 12 subunits.

It localises to the nucleus. Functionally, DNA-dependent RNA polymerase catalyzes the transcription of DNA into RNA using the four ribonucleoside triphosphates as substrates. Component of RNA polymerase II which synthesizes mRNA precursors and many functional non-coding RNAs. Pol II is the central component of the basal RNA polymerase II transcription machinery. It is composed of mobile elements that move relative to each other. RPB11 is part of the core element with the central large cleft. The polypeptide is Probable DNA-directed RNA polymerase II subunit RPB11 (Plasmodium falciparum (isolate 3D7)).